A 285-amino-acid chain; its full sequence is tRNA pseudouridine synthase B (285 aa).

D40 serves as the catalytic Nucleophile.

This sequence belongs to the pseudouridine synthase TruB family. Type 1 subfamily.

It catalyses the reaction uridine(55) in tRNA = pseudouridine(55) in tRNA. Its function is as follows. Responsible for synthesis of pseudouridine from uracil-55 in the psi GC loop of transfer RNAs. The polypeptide is tRNA pseudouridine synthase B (Caldanaerobacter subterraneus subsp. tengcongensis (strain DSM 15242 / JCM 11007 / NBRC 100824 / MB4) (Thermoanaerobacter tengcongensis)).